The following is a 306-amino-acid chain: Mycothiol acetyltransferase (306 aa).

N-acetyltransferase domains are found at residues 5–157 and 159–306; these read EIYE…EPAA and ITIR…HKKL. Glu36 contributes to the 1D-myo-inositol 2-(L-cysteinylamino)-2-deoxy-alpha-D-glucopyranoside binding site. 82-84 is an acetyl-CoA binding site; the sequence is MLV. Asp186, Lys227, and Glu238 together coordinate 1D-myo-inositol 2-(L-cysteinylamino)-2-deoxy-alpha-D-glucopyranoside. 242 to 244 is a binding site for acetyl-CoA; sequence LGV. Tyr276 lines the 1D-myo-inositol 2-(L-cysteinylamino)-2-deoxy-alpha-D-glucopyranoside pocket. Residue 281–286 participates in acetyl-CoA binding; sequence NVRAVR.

This sequence belongs to the acetyltransferase family. MshD subfamily. As to quaternary structure, monomer.

The catalysed reaction is 1D-myo-inositol 2-(L-cysteinylamino)-2-deoxy-alpha-D-glucopyranoside + acetyl-CoA = mycothiol + CoA + H(+). In terms of biological role, catalyzes the transfer of acetyl from acetyl-CoA to desacetylmycothiol (Cys-GlcN-Ins) to form mycothiol. This Stackebrandtia nassauensis (strain DSM 44728 / CIP 108903 / NRRL B-16338 / NBRC 102104 / LLR-40K-21) protein is Mycothiol acetyltransferase.